Here is a 273-residue protein sequence, read N- to C-terminus: 1,4-dihydroxy-2-naphthoyl-CoA synthase (273 aa).

Substrate is bound by residues Arg-34, 73 to 77 (SGGDQ), Tyr-85, 117 to 121 (YAVGG), Thr-143, Ser-149, Tyr-246, and Lys-261. Residue 142 to 144 (QTG) participates in hydrogencarbonate binding. The segment covering 254–265 (GRDAFKEKRDPD) has biased composition (basic and acidic residues). The interval 254–273 (GRDAFKEKRDPDFDQFPKFP) is disordered.

This sequence belongs to the enoyl-CoA hydratase/isomerase family. MenB subfamily. It depends on hydrogencarbonate as a cofactor.

The enzyme catalyses 2-succinylbenzoyl-CoA + H(+) = 1,4-dihydroxy-2-naphthoyl-CoA + H2O. It participates in quinol/quinone metabolism; 1,4-dihydroxy-2-naphthoate biosynthesis; 1,4-dihydroxy-2-naphthoate from chorismate: step 6/7. Its pathway is quinol/quinone metabolism; menaquinone biosynthesis. Converts o-succinylbenzoyl-CoA (OSB-CoA) to 1,4-dihydroxy-2-naphthoyl-CoA (DHNA-CoA). This chain is 1,4-dihydroxy-2-naphthoyl-CoA synthase, found in Staphylococcus aureus (strain Mu50 / ATCC 700699).